We begin with the raw amino-acid sequence, 95 residues long: Aspartyl/glutamyl-tRNA(Asn/Gln) amidotransferase subunit C (95 aa).

The protein belongs to the GatC family. As to quaternary structure, heterotrimer of A, B and C subunits.

The enzyme catalyses L-glutamyl-tRNA(Gln) + L-glutamine + ATP + H2O = L-glutaminyl-tRNA(Gln) + L-glutamate + ADP + phosphate + H(+). The catalysed reaction is L-aspartyl-tRNA(Asn) + L-glutamine + ATP + H2O = L-asparaginyl-tRNA(Asn) + L-glutamate + ADP + phosphate + 2 H(+). Allows the formation of correctly charged Asn-tRNA(Asn) or Gln-tRNA(Gln) through the transamidation of misacylated Asp-tRNA(Asn) or Glu-tRNA(Gln) in organisms which lack either or both of asparaginyl-tRNA or glutaminyl-tRNA synthetases. The reaction takes place in the presence of glutamine and ATP through an activated phospho-Asp-tRNA(Asn) or phospho-Glu-tRNA(Gln). This is Aspartyl/glutamyl-tRNA(Asn/Gln) amidotransferase subunit C from Gluconobacter oxydans (strain 621H) (Gluconobacter suboxydans).